A 449-amino-acid polypeptide reads, in one-letter code: Signal recognition particle protein (449 aa).

GTP contacts are provided by residues 109–116 (GLQGSGKT), 191–195 (DTAGR), and 249–252 (SRID).

This sequence belongs to the GTP-binding SRP family. SRP54 subfamily. In terms of assembly, part of the signal recognition particle protein translocation system, which is composed of SRP and FtsY. SRP is a ribonucleoprotein composed of Ffh and a 4.5S RNA molecule.

The protein resides in the cytoplasm. The enzyme catalyses GTP + H2O = GDP + phosphate + H(+). Involved in targeting and insertion of nascent membrane proteins into the cytoplasmic membrane. Binds to the hydrophobic signal sequence of the ribosome-nascent chain (RNC) as it emerges from the ribosomes. The SRP-RNC complex is then targeted to the cytoplasmic membrane where it interacts with the SRP receptor FtsY. Interaction with FtsY leads to the transfer of the RNC complex to the Sec translocase for insertion into the membrane, the hydrolysis of GTP by both Ffh and FtsY, and the dissociation of the SRP-FtsY complex into the individual components. In Rickettsia conorii (strain ATCC VR-613 / Malish 7), this protein is Signal recognition particle protein.